Here is a 551-residue protein sequence, read N- to C-terminus: MQTVETLNEGLKRAYTVTIPANDVAQRVEAEIKSIAPQVRMPGFRPGKVPANLIKKMHGPAIEQDVLNKTVQDGVQQLLAEQKLRPAMQPSVELVGGDYEPGKDVALKVELEVLPDVPPPAIEGLKLERLSVEAPTDEIDAQIKRIADQQKRYDDAKDGHPAVEGDLVVLDFAGSVDGVAFEGGTGTGMSVELGSGRLIPGFEDQLEGIKKGESRSLNVTFPKDYGEKSLAGKAAVFEVTATDVRVPGETKVDDEFAQSLGLQGLDQLRELIKGQVEQELNGLTRTHMKRKLLDQLAAGHDFPVPPSMVEAEFGQIWAQLEHEATHEEDPEAARAEMEKDRDDYRAIAERRVRLGLLLSEIGQQNGVEVSAQEMQRLVQQAAMQYQPADRDRFVQYLQQDPMAAAQLRAPLYEDKVVDFLFDKAEVSDRTVTRDELEAAIEADDDTIGKGHVHGPGCGHDHHDHDHDHDHAAPAKKPAAKKAAAKPAAEEAPAAEDKPAAKKKAAVKTEEAAEAAPAPKKAPAKKAAAAKAEEAPAAAPKKAPAKKKAAAE.

In terms of domain architecture, PPIase FKBP-type spans 165–250 (GDLVVLDFAG…ATDVRVPGET (86 aa)). Residues 442 to 551 (ADDDTIGKGH…APAKKKAAAE (110 aa)) form a disordered region. Residues 458–472 (GHDHHDHDHDHDHAA) are compositionally biased toward basic and acidic residues. The segment covering 513-541 (EAAPAPKKAPAKKAAAAKAEEAPAAAPKK) has biased composition (low complexity). Residues 542–551 (APAKKKAAAE) show a composition bias toward basic residues.

Belongs to the FKBP-type PPIase family. Tig subfamily.

The protein resides in the cytoplasm. The catalysed reaction is [protein]-peptidylproline (omega=180) = [protein]-peptidylproline (omega=0). In terms of biological role, involved in protein export. Acts as a chaperone by maintaining the newly synthesized protein in an open conformation. Functions as a peptidyl-prolyl cis-trans isomerase. The sequence is that of Trigger factor from Rhizorhabdus wittichii (strain DSM 6014 / CCUG 31198 / JCM 15750 / NBRC 105917 / EY 4224 / RW1) (Sphingomonas wittichii).